The sequence spans 189 residues: Photosystem I assembly protein Ycf4 (189 aa).

The next 2 helical transmembrane spans lie at 31–51 (TVIL…YFGF) and 70–90 (VMSF…LTII).

The protein belongs to the Ycf4 family.

It is found in the plastid. Its subcellular location is the chloroplast thylakoid membrane. In terms of biological role, seems to be required for the assembly of the photosystem I complex. The polypeptide is Photosystem I assembly protein Ycf4 (Chlorokybus atmophyticus (Soil alga)).